A 46-amino-acid chain; its full sequence is Light-harvesting protein B-800/850 beta 1 chain (46 aa).

At 2–19 (AERSLSGLTEEEAIAVHD) the chain is on the cytoplasmic side. Residues His-18 and His-36 each contribute to the a bacteriochlorophyll site. Residues 20–42 (QFKTTFSAFIILAAVAHVLVWVW) traverse the membrane as a helical segment. Residues 43–46 (KPWF) are Periplasmic-facing.

The protein belongs to the antenna complex beta subunit family. In terms of assembly, the core complex is formed by different alpha and beta chains, binding bacteriochlorophyll molecules, and arranged most probably in tetrameric structures disposed around the reaction center.

The protein resides in the cell inner membrane. Antenna complexes are light-harvesting systems, which transfer the excitation energy to the reaction centers. This chain is Light-harvesting protein B-800/850 beta 1 chain (B1), found in Magnetospirillum molischianum (Rhodospirillum molischianum).